A 212-amino-acid chain; its full sequence is Putative aryl-alcohol dehydrogenase AAD6 (212 aa).

The active-site Proton donor is Y76.

The protein belongs to the aldo/keto reductase family. Aldo/keto reductase 2 subfamily.

The chain is Putative aryl-alcohol dehydrogenase AAD6 from Saccharomyces cerevisiae (strain ATCC 204508 / S288c) (Baker's yeast).